A 375-amino-acid polypeptide reads, in one-letter code: Protein RecA (375 aa).

Residues 1–20 (MPAEMKSAASGSDPRSSGER) form a disordered region. 79–86 (GPESSGKT) lines the ATP pocket.

Belongs to the RecA family.

The protein localises to the cytoplasm. Its function is as follows. Can catalyze the hydrolysis of ATP in the presence of single-stranded DNA, the ATP-dependent uptake of single-stranded DNA by duplex DNA, and the ATP-dependent hybridization of homologous single-stranded DNAs. It interacts with LexA causing its activation and leading to its autocatalytic cleavage. This is Protein RecA from Parasynechococcus marenigrum (strain WH8102).